The chain runs to 489 residues: Envelope glycoprotein C homolog (489 aa).

The first 32 residues, 1–32, serve as a signal peptide directing secretion; that stretch reads MVSNMRVLRVLRLTGWVGIFLVLSLQQTSCAG. At 33 to 455 the chain is on the virion surface side; that stretch reads LPHNVDTHHI…YYDATPSARG (423 aa). The tract at residues 59–94 is disordered; that stretch reads EVPNSPTTELSTTVATKTAVPTTESTSSSEAHRNSS. The segment covering 60–69 has biased composition (polar residues); it reads VPNSPTTELS. The span at 70–81 shows a compositional bias: low complexity; the sequence is TTVATKTAVPTT. Residues asparagine 92, asparagine 112, asparagine 204, asparagine 346, and asparagine 392 are each glycosylated (N-linked (GlcNAc...) asparagine; by host). Residues 250–348 form the Ig-like domain; that stretch reads PASVDVLAPP…GDMISTSNAT (99 aa). A helical membrane pass occupies residues 456–486; sequence MPMIVTITAVLGLALFLGIGIIITALCFYLP. The Cytoplasmic segment spans residues 487-489; the sequence is GRN.

Belongs to the herpesviridae glycoprotein C family.

The protein resides in the virion membrane. This Gallus gallus (Chicken) protein is Envelope glycoprotein C homolog (gC).